A 125-amino-acid chain; its full sequence is Phosphoribosyl-AMP cyclohydrolase (125 aa).

Asp74 contributes to the Mg(2+) binding site. Zn(2+) is bound at residue Cys75. Positions 76 and 78 each coordinate Mg(2+). Positions 92 and 99 each coordinate Zn(2+).

This sequence belongs to the PRA-CH family. As to quaternary structure, homodimer. It depends on Mg(2+) as a cofactor. Zn(2+) is required as a cofactor.

The protein localises to the cytoplasm. The enzyme catalyses 1-(5-phospho-beta-D-ribosyl)-5'-AMP + H2O = 1-(5-phospho-beta-D-ribosyl)-5-[(5-phospho-beta-D-ribosylamino)methylideneamino]imidazole-4-carboxamide. The protein operates within amino-acid biosynthesis; L-histidine biosynthesis; L-histidine from 5-phospho-alpha-D-ribose 1-diphosphate: step 3/9. In terms of biological role, catalyzes the hydrolysis of the adenine ring of phosphoribosyl-AMP. This is Phosphoribosyl-AMP cyclohydrolase from Trichlorobacter lovleyi (strain ATCC BAA-1151 / DSM 17278 / SZ) (Geobacter lovleyi).